Consider the following 214-residue polypeptide: MINTILGLILAYLLGSIPTGLWIGQIFFKKNLREYGSGNTGTTNTFRILGKTAGTVTFAIDFLKGTLATLLPLFLHINGISPMIFGLIAVLGHTFPIFAEFKGGKAVATSAGVVLGFSPLFFSYLIIIFIVTLYLGSMISLASIVVAGFAIISVLIFPLLGIILPSYDLLFTLIIILLASIILIRHRDNMERIKNKSENLIPWGINITKQVPKK.

The next 5 helical transmembrane spans lie at 8 to 28, 70 to 90, 111 to 131, 144 to 164, and 165 to 185; these read LILA…QIFF, LLPL…LIAV, AGVV…IFIV, IVVA…GIIL, and PSYD…ILIR.

It belongs to the PlsY family. As to quaternary structure, probably interacts with PlsX.

It localises to the cell membrane. It catalyses the reaction an acyl phosphate + sn-glycerol 3-phosphate = a 1-acyl-sn-glycero-3-phosphate + phosphate. The protein operates within lipid metabolism; phospholipid metabolism. Functionally, catalyzes the transfer of an acyl group from acyl-phosphate (acyl-PO(4)) to glycerol-3-phosphate (G3P) to form lysophosphatidic acid (LPA). This enzyme utilizes acyl-phosphate as fatty acyl donor, but not acyl-CoA or acyl-ACP. The protein is Glycerol-3-phosphate acyltransferase of Streptococcus gordonii (strain Challis / ATCC 35105 / BCRC 15272 / CH1 / DL1 / V288).